Consider the following 338-residue polypeptide: D-erythrose-4-phosphate dehydrogenase (338 aa).

Residue 11–12 participates in NAD(+) binding; that stretch reads RI. Substrate is bound by residues 153–155, R199, 212–213, and R235; these read SCT and TK. C154 (nucleophile) is an active-site residue. N317 contributes to the NAD(+) binding site.

Belongs to the glyceraldehyde-3-phosphate dehydrogenase family. Epd subfamily. As to quaternary structure, homotetramer.

It localises to the cytoplasm. It catalyses the reaction D-erythrose 4-phosphate + NAD(+) + H2O = 4-phospho-D-erythronate + NADH + 2 H(+). It participates in cofactor biosynthesis; pyridoxine 5'-phosphate biosynthesis; pyridoxine 5'-phosphate from D-erythrose 4-phosphate: step 1/5. Catalyzes the NAD-dependent conversion of D-erythrose 4-phosphate to 4-phosphoerythronate. The polypeptide is D-erythrose-4-phosphate dehydrogenase (Shewanella sp. (strain MR-4)).